Consider the following 702-residue polypeptide: Elongation factor G 1 (702 aa).

Residues 8–290 form the tr-type G domain; that stretch reads ERYRNIGISA…AVIDFLPSPV (283 aa). Residues 17-24, 88-92, and 142-145 contribute to the GTP site; these read AHIDAGKT, DTPGH, and NKMD.

It belongs to the TRAFAC class translation factor GTPase superfamily. Classic translation factor GTPase family. EF-G/EF-2 subfamily.

Its subcellular location is the cytoplasm. Catalyzes the GTP-dependent ribosomal translocation step during translation elongation. During this step, the ribosome changes from the pre-translocational (PRE) to the post-translocational (POST) state as the newly formed A-site-bound peptidyl-tRNA and P-site-bound deacylated tRNA move to the P and E sites, respectively. Catalyzes the coordinated movement of the two tRNA molecules, the mRNA and conformational changes in the ribosome. The protein is Elongation factor G 1 of Cupriavidus pinatubonensis (strain JMP 134 / LMG 1197) (Cupriavidus necator (strain JMP 134)).